An 86-amino-acid polypeptide reads, in one-letter code: Small ribosomal subunit protein bS20 (86 aa).

The protein belongs to the bacterial ribosomal protein bS20 family.

Functionally, binds directly to 16S ribosomal RNA. In Pseudarthrobacter chlorophenolicus (strain ATCC 700700 / DSM 12829 / CIP 107037 / JCM 12360 / KCTC 9906 / NCIMB 13794 / A6) (Arthrobacter chlorophenolicus), this protein is Small ribosomal subunit protein bS20.